Reading from the N-terminus, the 454-residue chain is Chromosomal replication initiator protein DnaA (454 aa).

A domain I, interacts with DnaA modulators region spans residues 1–83 (MTEKEHFFWN…IKVEYVFDEA (83 aa)). The domain II stretch occupies residues 83–113 (ALVSETKPTLANNDFSNKREQQTPDLPTLNS). The tract at residues 114–332 (DLNSKYTFDN…GALKDISLVA (219 aa)) is domain III, AAA+ region. Residues Gly-158, Gly-160, Lys-161, and Thr-162 each contribute to the ATP site. The domain IV, binds dsDNA stretch occupies residues 333–454 (NVRQLDTITV…EIDTIKNKIK (122 aa)).

Belongs to the DnaA family. As to quaternary structure, oligomerizes as a right-handed, spiral filament on DNA at oriC.

Its subcellular location is the cytoplasm. Its function is as follows. Plays an essential role in the initiation and regulation of chromosomal replication. ATP-DnaA binds to the origin of replication (oriC) to initiate formation of the DNA replication initiation complex once per cell cycle. Binds the DnaA box (a 9 base pair repeat at the origin) and separates the double-stranded (ds)DNA. Forms a right-handed helical filament on oriC DNA; dsDNA binds to the exterior of the filament while single-stranded (ss)DNA is stabiized in the filament's interior. The ATP-DnaA-oriC complex binds and stabilizes one strand of the AT-rich DNA unwinding element (DUE), permitting loading of DNA polymerase. After initiation quickly degrades to an ADP-DnaA complex that is not apt for DNA replication. Binds acidic phospholipids. This chain is Chromosomal replication initiator protein DnaA, found in Streptococcus thermophilus (strain ATCC BAA-250 / LMG 18311).